The sequence spans 241 residues: RAD9, HUS1, RAD1-interacting nuclear orphan protein 1 (241 aa).

Over residues 1-10 the composition is skewed to basic residues; that stretch reads MPPRKKRRQA. Residues 1-27 are disordered; sequence MPPRKKRRQAAQKPQLLFHQQPLEAPK. The short motif at 56–62 is the RAD1-binding motif element; the sequence is SWVSPQF. 2 disordered regions span residues 68 to 134 and 157 to 204; these read SWFP…PLVP and IPPD…LVTD. Residues 72 to 87 show a composition bias toward basic residues; sequence GKRKHHHRDHARRSSR. Positions 100–110 are enriched in polar residues; the sequence is ETPQSSASSAT. Positions 129 to 136 match the D-box motif; the sequence is GRPLVPML. Residues 177 to 181 carry the KEN box motif; sequence LRENS. Residues 181–193 show a composition bias toward polar residues; that stretch reads SLPSCSLHTSTPK.

Interacts (when phosphorylated by PLK1) with POLQ; promoting POLQ recruitment to DNA damage sites. Interacts with RAD1; interaction is direct and promotes association with the 9-1-1 (RAD9-RAD1-HUS1) complex. Interacts with RAD18. Interacts with TOPBP1. Interacts with UBE2N. In terms of processing, phosphorylated by PLK1, promoting interaction with polymerase theta (POLQ). Ubiquitinated and degraded by the APC/C complex upon mitotic exit.

The protein resides in the nucleus. Its subcellular location is the chromosome. In terms of biological role, involved in microhomology-mediated end-joining (MMEJ) DNA repair by promoting recruitment of polymerase theta (POLQ) to DNA damage sites during mitosis. MMEJ is an alternative non-homologous end-joining (NHEJ) machinery that takes place during mitosis to repair double-strand breaks in DNA that originate in S-phase. Accumulates in M-phase; following phosphorylation by PLK1, interacts with POLQ, enabling its recruitment to double-strand breaks for subsequent repair. Also involved in the DNA damage response (DDR) signaling in response to genotoxic stresses such as ionizing radiation (IR) during the S phase. Recruited to sites of DNA damage through interaction with the 9-1-1 cell-cycle checkpoint response complex and TOPBP1 in a ATR-dependent manner. Required for the progression of the G1 to S phase transition. Plays a role in the stimulation of CHEK1 phosphorylation. The sequence is that of RAD9, HUS1, RAD1-interacting nuclear orphan protein 1 (RHNO1) from Bos taurus (Bovine).